The chain runs to 41 residues: Large ribosomal subunit protein bL36 (41 aa).

This sequence belongs to the bacterial ribosomal protein bL36 family.

This chain is Large ribosomal subunit protein bL36, found in Rhizobium rhizogenes (strain K84 / ATCC BAA-868) (Agrobacterium radiobacter).